The primary structure comprises 317 residues: Neuroguidin-A (317 aa).

2 disordered regions span residues 125-170 and 280-317; these read ENDP…SKVK and SALT…RRRH. A compositionally biased stretch (acidic residues) spans 146-157; that stretch reads DERESDSGEEGA. Positions 297–317 are enriched in basic residues; it reads KKSKKGPKKSKKKKGFSRRRH.

It belongs to the SAS10 family. In terms of assembly, part of the small subunit (SSU) processome, composed of more than 70 proteins and the RNA chaperone small nucleolar RNA (snoRNA) U3.

The protein localises to the nucleus. It localises to the nucleolus. The protein resides in the chromosome. It is found in the centromere. Its subcellular location is the cytoplasm. The protein localises to the cell projection. It localises to the axon. The protein resides in the dendrite. It is found in the filopodium. In terms of biological role, part of the small subunit (SSU) processome, first precursor of the small eukaryotic ribosomal subunit. During the assembly of the SSU processome in the nucleolus, many ribosome biogenesis factors, an RNA chaperone and ribosomal proteins associate with the nascent pre-rRNA and work in concert to generate RNA folding, modifications, rearrangements and cleavage as well as targeted degradation of pre-ribosomal RNA by the RNA exosome. Its dissociation from the complex determines the transition from state pre-A1 to state pre-A1*. May inhibit mRNA translation. The polypeptide is Neuroguidin-A (ngdn-a) (Xenopus laevis (African clawed frog)).